Consider the following 126-residue polypeptide: UPF0325 protein VFMJ11_2099 (126 aa).

Belongs to the UPF0325 family.

This chain is UPF0325 protein VFMJ11_2099, found in Aliivibrio fischeri (strain MJ11) (Vibrio fischeri).